Consider the following 447-residue polypeptide: MATILQNLPAGQKVGIAFSGGLDTSAALRWMKNKGALPYAYTANLGQPDEPDYDAIPRKAMEYGAEKARLIDCRTQLAHEGIAALQAGAFHVRTAGATYFNTTPLGRAVTGTMLVAAMKEDDVHIWGDGSTFKGNDIERFYRYGLLTNPSLKIYKPWLDQLFIDELGGRAEMSAFMTKEGFGYKMSAEKAYSTDSNMLGATHEAKDLEFLNSGMRIVNPIMGVAFWKDDVVVKAEEVSVRFEEGQPVALNGVEFNDPVELFLEANRIGGRHGLGMCDQIENRIIEAKSRGIYEAPGLALLHIAYERLVSGIHNEDTIEQYRMNGLKLGRLLYQGRWFDPQAIMLRETAQRWVARAVTGTVTLELRRGNDYSILNTESPNLTYAPERLSMEKVEDAPFSPADRIGQLTMRNLDIVDTRDKLGVYAQAGLLSLGGNAALAQLGDDSSRK.

Residues 17–25 (AFSGGLDTS) and alanine 43 contribute to the ATP site. Tyrosine 99 is a binding site for L-citrulline. Residues glycine 129 and threonine 131 each coordinate ATP. L-aspartate-binding residues include threonine 131, asparagine 135, and aspartate 136. An L-citrulline-binding site is contributed by asparagine 135. Residue aspartate 136 coordinates ATP. Positions 139 and 192 each coordinate L-citrulline. Residue aspartate 194 participates in ATP binding. L-citrulline-binding residues include threonine 201, glutamate 203, and glutamate 280.

It belongs to the argininosuccinate synthase family. Type 2 subfamily. As to quaternary structure, homotetramer.

It is found in the cytoplasm. It catalyses the reaction L-citrulline + L-aspartate + ATP = 2-(N(omega)-L-arginino)succinate + AMP + diphosphate + H(+). Its pathway is amino-acid biosynthesis; L-arginine biosynthesis; L-arginine from L-ornithine and carbamoyl phosphate: step 2/3. The protein is Argininosuccinate synthase of Paracidovorax citrulli (strain AAC00-1) (Acidovorax citrulli).